Reading from the N-terminus, the 101-residue chain is Urease subunit beta (101 aa).

It belongs to the urease beta subunit family. Heterotrimer of UreA (gamma), UreB (beta) and UreC (alpha) subunits. Three heterotrimers associate to form the active enzyme.

It localises to the cytoplasm. The catalysed reaction is urea + 2 H2O + H(+) = hydrogencarbonate + 2 NH4(+). It functions in the pathway nitrogen metabolism; urea degradation; CO(2) and NH(3) from urea (urease route): step 1/1. This is Urease subunit beta from Cupriavidus metallidurans (strain ATCC 43123 / DSM 2839 / NBRC 102507 / CH34) (Ralstonia metallidurans).